Here is a 209-residue protein sequence, read N- to C-terminus: Large ribosomal subunit protein uL3 (209 aa).

Q150 bears the N5-methylglutamine mark.

The protein belongs to the universal ribosomal protein uL3 family. In terms of assembly, part of the 50S ribosomal subunit. Forms a cluster with proteins L14 and L19. Post-translationally, methylated by PrmB.

Its function is as follows. One of the primary rRNA binding proteins, it binds directly near the 3'-end of the 23S rRNA, where it nucleates assembly of the 50S subunit. This Ectopseudomonas mendocina (strain ymp) (Pseudomonas mendocina) protein is Large ribosomal subunit protein uL3.